Reading from the N-terminus, the 289-residue chain is Oxaloacetate decarboxylase (289 aa).

Ser-47 is a binding site for substrate. Residue Asp-85 participates in Mg(2+) binding. 2 residues coordinate substrate: Arg-156 and His-232.

This sequence belongs to the isocitrate lyase/PEP mutase superfamily. Oxaloacetate decarboxylase family. In terms of assembly, homotetramer; dimer of dimers. It depends on Mg(2+) as a cofactor.

It catalyses the reaction oxaloacetate + H(+) = pyruvate + CO2. In terms of biological role, catalyzes the decarboxylation of oxaloacetate into pyruvate. Seems to play a role in maintaining cellular concentrations of bicarbonate and pyruvate. The protein is Oxaloacetate decarboxylase of Rhodopseudomonas palustris (strain BisB5).